Reading from the N-terminus, the 190-residue chain is NADH-quinone oxidoreductase subunit B (190 aa).

Residues cysteine 69, cysteine 70, cysteine 134, and cysteine 164 each coordinate [4Fe-4S] cluster.

This sequence belongs to the complex I 20 kDa subunit family. As to quaternary structure, NDH-1 is composed of 14 different subunits. Subunits NuoB, C, D, E, F, and G constitute the peripheral sector of the complex. Requires [4Fe-4S] cluster as cofactor.

The protein localises to the cell inner membrane. The enzyme catalyses a quinone + NADH + 5 H(+)(in) = a quinol + NAD(+) + 4 H(+)(out). In terms of biological role, NDH-1 shuttles electrons from NADH, via FMN and iron-sulfur (Fe-S) centers, to quinones in the respiratory chain. Couples the redox reaction to proton translocation (for every two electrons transferred, four hydrogen ions are translocated across the cytoplasmic membrane), and thus conserves the redox energy in a proton gradient. In Chelativorans sp. (strain BNC1), this protein is NADH-quinone oxidoreductase subunit B.